The following is a 96-amino-acid chain: Small ribosomal subunit protein bS6 (96 aa).

The protein belongs to the bacterial ribosomal protein bS6 family.

In terms of biological role, binds together with bS18 to 16S ribosomal RNA. This is Small ribosomal subunit protein bS6 from Bacillus thuringiensis subsp. konkukian (strain 97-27).